A 202-amino-acid chain; its full sequence is N-(5'-phosphoribosyl)anthranilate isomerase (202 aa).

This sequence belongs to the TrpF family.

It carries out the reaction N-(5-phospho-beta-D-ribosyl)anthranilate = 1-(2-carboxyphenylamino)-1-deoxy-D-ribulose 5-phosphate. It functions in the pathway amino-acid biosynthesis; L-tryptophan biosynthesis; L-tryptophan from chorismate: step 3/5. In Bacillus cereus (strain ATCC 14579 / DSM 31 / CCUG 7414 / JCM 2152 / NBRC 15305 / NCIMB 9373 / NCTC 2599 / NRRL B-3711), this protein is N-(5'-phosphoribosyl)anthranilate isomerase.